We begin with the raw amino-acid sequence, 256 residues long: Anti-Pycsar protein Apyc1 (256 aa).

Positions 21–230 (YNNSALVTFT…EDQDRVFLMH (210 aa)) are beta-lactamase-like. Zn(2+) contacts are provided by His64, His66, Asp68, and His69. Catalysis depends on residues Glu74 and Tyr112. The Zn(2+) site is built by His155, Asp179, and His230.

Belongs to the anti-Pycsar protein Apyc1 family. In terms of assembly, homodimer. Zn(2+) serves as cofactor.

The enzyme catalyses 3',5'-cyclic CMP + H2O = CMP + H(+). It carries out the reaction 3',5'-cyclic UMP + H2O = UMP + H(+). Functionally, counteracts the host Pycsar antiviral defense system. Phosphodiesterase that enables metal-dependent hydrolysis of host cyclic nucleotide Pycsar defense signals such as cCMP and cUMP. This is Anti-Pycsar protein Apyc1 from Bacillus phage BSP38.